The chain runs to 520 residues: Legumin A2 (520 aa).

The first 22 residues, 1–22 (MATKLLALSLSFCFLLLGGCFA), serve as a signal peptide directing secretion. 2 cysteine pairs are disulfide-bonded: C32–C65 and C108–C342. Residues 37–233 (LNALEPDNRI…AFNVNRHIVD (197 aa)) form the Cupin type-1 1 domain. The segment at 250–339 (VKGGLSIISP…RRQGDNGLEE (90 aa)) is disordered. The Cupin type-1 2 domain maps to 348-497 (LNIGPSSSPD…TFNLQRNEAR (150 aa)).

Belongs to the 11S seed storage protein (globulins) family. Hexamer; each subunit is composed of an acidic and a basic chain derived from a single precursor and linked by a disulfide bond.

In terms of biological role, this protein found in the seeds of many leguminous and non-leguminous plants is the source of sulfur-containing amino acids in seed meals. The polypeptide is Legumin A2 (LEGA2) (Pisum sativum (Garden pea)).